Reading from the N-terminus, the 905-residue chain is Translation initiation factor IF-2 (905 aa).

Positions His-50–Glu-62 are enriched in basic and acidic residues. Residues His-50–Leu-306 form a disordered region. Residues Lys-63–Lys-75 show a composition bias toward low complexity. The span at Gly-89 to Ala-125 shows a compositional bias: pro residues. Positions Pro-161 to Pro-171 are enriched in low complexity. A compositionally biased stretch (gly residues) spans Gly-233–Gly-276. Basic residues predominate over residues Arg-280–Arg-290. Residues His-291–Gly-302 are compositionally biased toward basic and acidic residues. Residues Lys-401 to Thr-575 enclose the tr-type G domain. Positions Gly-410–Thr-417 are G1. Gly-410–Thr-417 is a GTP binding site. The G2 stretch occupies residues Gly-435–Gly-439. Residues Asp-460–Gly-463 form a G3 region. GTP contacts are provided by residues Asp-460–His-464 and Asn-514–Asp-517. Residues Asn-514–Asp-517 form a G4 region. The interval Ser-550–Lys-552 is G5.

The protein belongs to the TRAFAC class translation factor GTPase superfamily. Classic translation factor GTPase family. IF-2 subfamily.

The protein resides in the cytoplasm. In terms of biological role, one of the essential components for the initiation of protein synthesis. Protects formylmethionyl-tRNA from spontaneous hydrolysis and promotes its binding to the 30S ribosomal subunits. Also involved in the hydrolysis of GTP during the formation of the 70S ribosomal complex. The polypeptide is Translation initiation factor IF-2 (Corynebacterium aurimucosum (strain ATCC 700975 / DSM 44827 / CIP 107346 / CN-1) (Corynebacterium nigricans)).